The sequence spans 303 residues: CDAN1-interacting nuclease 1 (303 aa).

The protein localises to the nucleus. It localises to the cytoplasm. Its function is as follows. May play a role in erythroid cell differentiation. In Xenopus tropicalis (Western clawed frog), this protein is CDAN1-interacting nuclease 1 (cdin1).